Here is a 224-residue protein sequence, read N- to C-terminus: Octanoyltransferase (224 aa).

A BPL/LPL catalytic domain is found at 33–213 (GTTAETMLLL…ALQAEFGREA (181 aa)). Residues 51 to 71 (GKRTTDDERPTDGTPVVDVDR) are disordered. Substrate is bound by residues 71 to 78 (RGGKITWH), 143 to 145 (AIG), and 156 to 158 (GFA). C174 functions as the Acyl-thioester intermediate in the catalytic mechanism.

The protein belongs to the LipB family.

The protein localises to the cytoplasm. It carries out the reaction octanoyl-[ACP] + L-lysyl-[protein] = N(6)-octanoyl-L-lysyl-[protein] + holo-[ACP] + H(+). It functions in the pathway protein modification; protein lipoylation via endogenous pathway; protein N(6)-(lipoyl)lysine from octanoyl-[acyl-carrier-protein]: step 1/2. Its function is as follows. Catalyzes the transfer of endogenously produced octanoic acid from octanoyl-acyl-carrier-protein onto the lipoyl domains of lipoate-dependent enzymes. Lipoyl-ACP can also act as a substrate although octanoyl-ACP is likely to be the physiological substrate. The polypeptide is Octanoyltransferase (Leifsonia xyli subsp. xyli (strain CTCB07)).